The sequence spans 874 residues: Alanine--tRNA ligase (874 aa).

Residues histidine 562, histidine 566, cysteine 665, and histidine 669 each contribute to the Zn(2+) site.

Belongs to the class-II aminoacyl-tRNA synthetase family. Zn(2+) is required as a cofactor.

The protein resides in the cytoplasm. It catalyses the reaction tRNA(Ala) + L-alanine + ATP = L-alanyl-tRNA(Ala) + AMP + diphosphate. Its function is as follows. Catalyzes the attachment of alanine to tRNA(Ala) in a two-step reaction: alanine is first activated by ATP to form Ala-AMP and then transferred to the acceptor end of tRNA(Ala). Also edits incorrectly charged Ser-tRNA(Ala) and Gly-tRNA(Ala) via its editing domain. This Pseudomonas putida (strain ATCC 700007 / DSM 6899 / JCM 31910 / BCRC 17059 / LMG 24140 / F1) protein is Alanine--tRNA ligase.